Reading from the N-terminus, the 205-residue chain is Probable thymidylate kinase (205 aa).

An ATP-binding site is contributed by 10–17 (GIDGSGKT).

It belongs to the thymidylate kinase family.

The enzyme catalyses dTMP + ATP = dTDP + ADP. In Pyrococcus abyssi (strain GE5 / Orsay), this protein is Probable thymidylate kinase (tmk).